The chain runs to 480 residues: MAASAVCRAACSGTQVLLRTRRSPALLRLPALRGTATFAQALQSVPETQVSILDNGLRVASEQSSHATCTVGVWIDAGSRYETEKNNGAGYFLEHLAFKGTKNRPGNALEKEVESIGAHLNAYSTREHTAYLIKALSKDLPKVVELLADIVQNSSLEDSQIEKERDVILREMQENDASMQNVVFDYLHATAFQGTPLAQAVEGPSENVRRLSRTDLTDYLNRHYKAPRMVLAAAGGVEHQQLLDLAQKHLSSVSRVYEEDAVPGLTPCRFTGSEIRHRDDALPLAHVAIAVEGPGWANPDNVTLQVANAIIGHYDCTYGGGVHLSSPLASVAVANKLCQSFQTFNISYSDTGLLGAHFVCDAMSIDDMVFFLQGQWMRLCTSATESEVTRGKNILRNALVSHLDGTTPVCEDIGRSLLTYGRRIPLAEWESRIQEVDAQMLRDICSKYFYDQCPAVAGYGPIEQLPDYNRIRSGMFWLRF.

The N-terminal 34 residues, 1–34, are a transit peptide targeting the mitochondrion; the sequence is MAASAVCRAACSGTQVLLRTRRSPALLRLPALRG. Residues Lys111 and Lys138 each carry the N6-acetyllysine modification. Residue Lys163 is modified to N6-acetyllysine; alternate. N6-succinyllysine; alternate is present on Lys163. A Phosphoserine modification is found at Ser212. Position 214 is a phosphothreonine (Thr214). The residue at position 248 (Lys248) is an N6-acetyllysine.

Belongs to the peptidase M16 family. UQCRC1/QCR1 subfamily. Component of the ubiquinol-cytochrome c oxidoreductase (cytochrome b-c1 complex, complex III, CIII), a multisubunit enzyme composed of 11 subunits. The complex is composed of 3 respiratory subunits cytochrome b, cytochrome c1 and Rieske protein UQCRFS1, 2 core protein subunits UQCRC1/QCR1 and UQCRC2/QCR2, and 6 low-molecular weight protein subunits UQCRH/QCR6, UQCRB/QCR7, UQCRQ/QCR8, UQCR10/QCR9, UQCR11/QCR10 and subunit 9, the cleavage product of Rieske protein UQCRFS1. The complex exists as an obligatory dimer and forms supercomplexes (SCs) in the inner mitochondrial membrane with NADH-ubiquinone oxidoreductase (complex I, CI) and cytochrome c oxidase (complex IV, CIV), resulting in different assemblies (supercomplex SCI(1)III(2)IV(1) and megacomplex MCI(2)III(2)IV(2)). Interacts with UQCC6. Interacts with STMP1. In terms of processing, acetylation of Lys-138 is observed in liver mitochondria from fasted mice but not from fed mice. As to expression, expressed in neurons and astrocytes of the cerebral cortex and hippocampus (at protein level).

The protein resides in the mitochondrion inner membrane. Component of the ubiquinol-cytochrome c oxidoreductase, a multisubunit transmembrane complex that is part of the mitochondrial electron transport chain which drives oxidative phosphorylation. The respiratory chain contains 3 multisubunit complexes succinate dehydrogenase (complex II, CII), ubiquinol-cytochrome c oxidoreductase (cytochrome b-c1 complex, complex III, CIII) and cytochrome c oxidase (complex IV, CIV), that cooperate to transfer electrons derived from NADH and succinate to molecular oxygen, creating an electrochemical gradient over the inner membrane that drives transmembrane transport and the ATP synthase. The cytochrome b-c1 complex catalyzes electron transfer from ubiquinol to cytochrome c, linking this redox reaction to translocation of protons across the mitochondrial inner membrane, with protons being carried across the membrane as hydrogens on the quinol. In the process called Q cycle, 2 protons are consumed from the matrix, 4 protons are released into the intermembrane space and 2 electrons are passed to cytochrome c. The 2 core subunits UQCRC1/QCR1 and UQCRC2/QCR2 are homologous to the 2 mitochondrial-processing peptidase (MPP) subunits beta-MPP and alpha-MPP respectively, and they seem to have preserved their MPP processing properties. May be involved in the in situ processing of UQCRFS1 into the mature Rieske protein and its mitochondrial targeting sequence (MTS)/subunit 9 when incorporated into complex III. Seems to play an important role in the maintenance of proper mitochondrial function in nigral dopaminergic neurons. This Mus musculus (Mouse) protein is Cytochrome b-c1 complex subunit 1, mitochondrial (Uqcrc1).